Reading from the N-terminus, the 261-residue chain is Cytochrome c oxidase subunit 3 (261 aa).

Topologically, residues 1-15 (MVHQSHAYHMLKPSP) are mitochondrial matrix. The helical transmembrane segment at 16-34 (WPLTGALSALLMTSGLAMW) threads the bilayer. The Mitochondrial intermembrane segment spans residues 35–40 (FHFHST). Residues 41 to 66 (TLLLTGMLTNALTMYQWWRDVVREST) traverse the membrane as a helical segment. At 67-72 (YQGHHT) the chain is on the mitochondrial matrix side. A helical membrane pass occupies residues 73 to 105 (LPVQKGLRYGMILFITSEVFFFAGFFWAFYHSS). Residues 106-128 (LAPTPQLGGHWPPTGITPLNPLE) lie on the Mitochondrial intermembrane side of the membrane. The helical transmembrane segment at 129 to 152 (VPLLNTAVLLASGVSITWAHHSLM) threads the bilayer. The Mitochondrial matrix portion of the chain corresponds to 153 to 155 (ENN). The helical transmembrane segment at 156–183 (RTQMIQALLITILLGIYFTLLQASEYIE) threads the bilayer. Residues 184 to 190 (APFTISD) are Mitochondrial intermembrane-facing. A helical membrane pass occupies residues 191 to 223 (GIYGSTFFMTTGFHGLHVIIGSTFLTVCLSCQL). Residues 224-232 (LFHFTSKHH) are Mitochondrial matrix-facing. Residues 233-256 (FGFEAAAWYWHFVDVVWLFLYVSI) form a helical membrane-spanning segment. Residues 257–261 (YWWGS) lie on the Mitochondrial intermembrane side of the membrane.

Belongs to the cytochrome c oxidase subunit 3 family. As to quaternary structure, component of the cytochrome c oxidase (complex IV, CIV), a multisubunit enzyme composed of 14 subunits. The complex is composed of a catalytic core of 3 subunits MT-CO1, MT-CO2 and MT-CO3, encoded in the mitochondrial DNA, and 11 supernumerary subunits COX4I, COX5A, COX5B, COX6A, COX6B, COX6C, COX7A, COX7B, COX7C, COX8 and NDUFA4, which are encoded in the nuclear genome. The complex exists as a monomer or a dimer and forms supercomplexes (SCs) in the inner mitochondrial membrane with NADH-ubiquinone oxidoreductase (complex I, CI) and ubiquinol-cytochrome c oxidoreductase (cytochrome b-c1 complex, complex III, CIII), resulting in different assemblies (supercomplex SCI(1)III(2)IV(1) and megacomplex MCI(2)III(2)IV(2)).

Its subcellular location is the mitochondrion inner membrane. The enzyme catalyses 4 Fe(II)-[cytochrome c] + O2 + 8 H(+)(in) = 4 Fe(III)-[cytochrome c] + 2 H2O + 4 H(+)(out). Functionally, component of the cytochrome c oxidase, the last enzyme in the mitochondrial electron transport chain which drives oxidative phosphorylation. The respiratory chain contains 3 multisubunit complexes succinate dehydrogenase (complex II, CII), ubiquinol-cytochrome c oxidoreductase (cytochrome b-c1 complex, complex III, CIII) and cytochrome c oxidase (complex IV, CIV), that cooperate to transfer electrons derived from NADH and succinate to molecular oxygen, creating an electrochemical gradient over the inner membrane that drives transmembrane transport and the ATP synthase. Cytochrome c oxidase is the component of the respiratory chain that catalyzes the reduction of oxygen to water. Electrons originating from reduced cytochrome c in the intermembrane space (IMS) are transferred via the dinuclear copper A center (CU(A)) of subunit 2 and heme A of subunit 1 to the active site in subunit 1, a binuclear center (BNC) formed by heme A3 and copper B (CU(B)). The BNC reduces molecular oxygen to 2 water molecules using 4 electrons from cytochrome c in the IMS and 4 protons from the mitochondrial matrix. The protein is Cytochrome c oxidase subunit 3 (MT-CO3) of Pongo pygmaeus (Bornean orangutan).